Consider the following 203-residue polypeptide: Small ribosomal subunit protein uS4 (203 aa).

The segment at 15–46 is disordered; that stretch reads LGENIWGRPKSSVNRRSYGPGQHGQRRKSKVS. Residues 94–154 enclose the S4 RNA-binding domain; that stretch reads QRLDMVVYRA…KKAKEMALIA (61 aa).

The protein belongs to the universal ribosomal protein uS4 family. In terms of assembly, part of the 30S ribosomal subunit. Contacts protein S5. The interaction surface between S4 and S5 is involved in control of translational fidelity.

Functionally, one of the primary rRNA binding proteins, it binds directly to 16S rRNA where it nucleates assembly of the body of the 30S subunit. Its function is as follows. With S5 and S12 plays an important role in translational accuracy. The protein is Small ribosomal subunit protein uS4 of Novosphingobium aromaticivorans (strain ATCC 700278 / DSM 12444 / CCUG 56034 / CIP 105152 / NBRC 16084 / F199).